The sequence spans 694 residues: Cyclic nucleotide-gated ion channel 4 (694 aa).

Residues Met-1 to Arg-15 show a composition bias toward basic and acidic residues. The segment at Met-1–Arg-64 is disordered. The Cytoplasmic segment spans residues Met-1–Lys-92. The span at Ser-24 to Asp-53 shows a compositional bias: acidic residues. A helical membrane pass occupies residues Val-93–Ser-113. Over Val-114–Trp-126 the chain is Extracellular. The helical transmembrane segment at Leu-127–Trp-147 threads the bilayer. Topologically, residues Ile-148–Asn-187 are cytoplasmic. A helical transmembrane segment spans residues Gly-188–Ile-208. Residues Pro-209–Ser-216 lie on the Extracellular side of the membrane. Residues Val-217–Tyr-237 form a helical membrane-spanning segment. Over His-238–Gly-251 the chain is Cytoplasmic. The chain crosses the membrane as a helical span at residues Tyr-252–Ala-272. Topologically, residues His-273–Val-392 are extracellular. The helical transmembrane segment at Val-393 to Ile-413 threads the bilayer. Topologically, residues Lys-414–Tyr-694 are cytoplasmic. A nucleoside 3',5'-cyclic phosphate-binding positions include Leu-496–Tyr-626 and Asp-565. The calmodulin-binding stretch occupies residues Phe-610–Tyr-626. An IQ domain is found at Arg-631–Arg-660.

The protein belongs to the cyclic nucleotide-gated cation channel (TC 1.A.1.5) family. As to quaternary structure, homotetramer or heterotetramer.

It localises to the cell membrane. Acts as a cyclic nucleotide-gated ion channel. Permeable to potassium and sodium in a cyclic nucleotide-dependent fashion (cAMP or cGMP). Might constitute a common downstream component of the signaling pathways leading to hypersensitive response (HR). This Arabidopsis thaliana (Mouse-ear cress) protein is Cyclic nucleotide-gated ion channel 4 (CNGC4).